The following is a 429-amino-acid chain: Enolase (429 aa).

Gln163 lines the (2R)-2-phosphoglycerate pocket. The active-site Proton donor is Glu205. Mg(2+) contacts are provided by Asp242, Glu287, and Asp314. Positions 339, 368, 369, and 390 each coordinate (2R)-2-phosphoglycerate. Residue Lys339 is the Proton acceptor of the active site.

Belongs to the enolase family. Mg(2+) serves as cofactor.

The protein localises to the cytoplasm. The protein resides in the secreted. It is found in the cell surface. It catalyses the reaction (2R)-2-phosphoglycerate = phosphoenolpyruvate + H2O. It participates in carbohydrate degradation; glycolysis; pyruvate from D-glyceraldehyde 3-phosphate: step 4/5. Catalyzes the reversible conversion of 2-phosphoglycerate (2-PG) into phosphoenolpyruvate (PEP). It is essential for the degradation of carbohydrates via glycolysis. The chain is Enolase from Cupriavidus pinatubonensis (strain JMP 134 / LMG 1197) (Cupriavidus necator (strain JMP 134)).